Consider the following 81-residue polypeptide: Small ribosomal subunit protein uS17 (81 aa).

It belongs to the universal ribosomal protein uS17 family. Part of the 30S ribosomal subunit.

Functionally, one of the primary rRNA binding proteins, it binds specifically to the 5'-end of 16S ribosomal RNA. This is Small ribosomal subunit protein uS17 from Hyphomonas neptunium (strain ATCC 15444).